The sequence spans 166 residues: Small ribosomal subunit protein uS9 (166 aa).

A disordered region spans residues 135-166 (KKAGFLTRDPRATERKKYGLKKARKAPQYSKR). Over residues 142–151 (RDPRATERKK) the composition is skewed to basic and acidic residues. Positions 152–166 (YGLKKARKAPQYSKR) are enriched in basic residues.

This sequence belongs to the universal ribosomal protein uS9 family.

The chain is Small ribosomal subunit protein uS9 from Mycobacterium avium (strain 104).